Reading from the N-terminus, the 108-residue chain is Cell division protein FtsL (108 aa).

The Cytoplasmic portion of the chain corresponds to 1-24 (MSKDTASQPSLTKLIGLDIFGVGR). A helical membrane pass occupies residues 25 to 45 (LHAILLICIFLSAIGVVLATH). At 46 to 108 (NTRQMTVQRE…PDKEVIIKLR (63 aa)) the chain is on the periplasmic side.

Belongs to the FtsL family. Part of a complex composed of FtsB, FtsL and FtsQ.

The protein localises to the cell inner membrane. Essential cell division protein. May link together the upstream cell division proteins, which are predominantly cytoplasmic, with the downstream cell division proteins, which are predominantly periplasmic. This is Cell division protein FtsL from Aliivibrio fischeri (strain ATCC 700601 / ES114) (Vibrio fischeri).